We begin with the raw amino-acid sequence, 131 residues long: Fumarate reductase subunit C (131 aa).

A run of 3 helical transmembrane segments spans residues 30-50, 63-83, and 109-129; these read EGTA…LFAL, FLQN…ALLH, and IIKS…FVAL.

Belongs to the FrdC family. As to quaternary structure, part of an enzyme complex containing four subunits: a flavoprotein (FrdA), an iron-sulfur protein (FrdB), and two hydrophobic anchor proteins (FrdC and FrdD).

The protein resides in the cell inner membrane. Two distinct, membrane-bound, FAD-containing enzymes are responsible for the catalysis of fumarate and succinate interconversion; fumarate reductase is used in anaerobic growth, and succinate dehydrogenase is used in aerobic growth. Anchors the catalytic components of the fumarate reductase complex to the cell inner membrane, binds quinones. The sequence is that of Fumarate reductase subunit C from Shigella boydii serotype 4 (strain Sb227).